A 577-amino-acid chain; its full sequence is Arginine--tRNA ligase (577 aa).

The 'HIGH' region motif lies at Pro122–His132.

The protein belongs to the class-I aminoacyl-tRNA synthetase family. In terms of assembly, monomer.

It localises to the cytoplasm. The catalysed reaction is tRNA(Arg) + L-arginine + ATP = L-arginyl-tRNA(Arg) + AMP + diphosphate. The sequence is that of Arginine--tRNA ligase from Vibrio parahaemolyticus serotype O3:K6 (strain RIMD 2210633).